A 346-amino-acid polypeptide reads, in one-letter code: S-adenosylmethionine:tRNA ribosyltransferase-isomerase (346 aa).

Belongs to the QueA family. Monomer.

It localises to the cytoplasm. The catalysed reaction is 7-aminomethyl-7-carbaguanosine(34) in tRNA + S-adenosyl-L-methionine = epoxyqueuosine(34) in tRNA + adenine + L-methionine + 2 H(+). The protein operates within tRNA modification; tRNA-queuosine biosynthesis. In terms of biological role, transfers and isomerizes the ribose moiety from AdoMet to the 7-aminomethyl group of 7-deazaguanine (preQ1-tRNA) to give epoxyqueuosine (oQ-tRNA). In Lactococcus lactis subsp. cremoris (strain MG1363), this protein is S-adenosylmethionine:tRNA ribosyltransferase-isomerase.